The chain runs to 694 residues: Elongation factor G (694 aa).

A tr-type G domain is found at 8–287 (EDYRNFGIMA…AVVEFLPAPT (280 aa)). GTP-binding positions include 17–24 (AHIDAGKT), 86–90 (DTPGH), and 140–143 (NKMD).

Belongs to the TRAFAC class translation factor GTPase superfamily. Classic translation factor GTPase family. EF-G/EF-2 subfamily.

The protein resides in the cytoplasm. In terms of biological role, catalyzes the GTP-dependent ribosomal translocation step during translation elongation. During this step, the ribosome changes from the pre-translocational (PRE) to the post-translocational (POST) state as the newly formed A-site-bound peptidyl-tRNA and P-site-bound deacylated tRNA move to the P and E sites, respectively. Catalyzes the coordinated movement of the two tRNA molecules, the mRNA and conformational changes in the ribosome. The sequence is that of Elongation factor G from Brucella suis (strain ATCC 23445 / NCTC 10510).